The chain runs to 503 residues: MTDKKYIVALDQGTTSSRAVVMDHDANIVSVSQREFEQIYPKPGWVEHDPMEIWASQSSTLVEALAKADINSDQIAAIGITNQRETVVVWERETGKPIYNAIVWQCRRTAEICEQLKRDGMEEYIRKATGLVVDPYFSGTKVKWILDHVEGSRERAKRGELLFGTVDTWLIWKMTQGRVHVTDYTNASRTMLFNIHDLDWDDKMLDALDIPRAMLPEVRKSSEVYGQTNIGGKGGTRIPIAGIAGDQQAALFGQLCVKEGMAKNTYGTGCFMLMNTGEKAVTSTHGLLTTIACGPRGEVNYALEGAVFMAGASIQWLRDEMKLISDAFDSEYFATKVKDTNGVYVVPAFTGLGAPYWDPYARGAIFGLTRGVNSNHIIRATLESIAFQTRDVLEAMQADSGIRLHALRVDGGAVANNFLMQFQSDILGTRVERPEVREVTALGAAYLAGLAVGFWQNLDELQEKAVIEREFRPGIETTERNYRYSGWKKAVKRALAWEEHDEA.

Threonine 14 is an ADP binding site. Positions 14, 15, and 16 each coordinate ATP. Residue threonine 14 participates in sn-glycerol 3-phosphate binding. Arginine 18 provides a ligand contact to ADP. Sn-glycerol 3-phosphate-binding residues include arginine 84, glutamate 85, tyrosine 136, and aspartate 246. Residues arginine 84, glutamate 85, tyrosine 136, aspartate 246, and glutamine 247 each contribute to the glycerol site. Residues threonine 268 and glycine 311 each contribute to the ADP site. The ATP site is built by threonine 268, glycine 311, glutamine 315, and glycine 412. ADP contacts are provided by glycine 412 and asparagine 416.

The protein belongs to the FGGY kinase family. Homotetramer and homodimer (in equilibrium). Heterodimer with EIIA-Glc. Binds 1 zinc ion per glycerol kinase EIIA-Glc dimer. The zinc ion is important for dimerization.

The enzyme catalyses glycerol + ATP = sn-glycerol 3-phosphate + ADP + H(+). It functions in the pathway polyol metabolism; glycerol degradation via glycerol kinase pathway; sn-glycerol 3-phosphate from glycerol: step 1/1. Its activity is regulated as follows. Activity of this regulatory enzyme is affected by several metabolites. Allosterically and non-competitively inhibited by fructose 1,6-bisphosphate (FBP) and unphosphorylated phosphocarrier protein EIIA-Glc (III-Glc), an integral component of the bacterial phosphotransferase (PTS) system. Key enzyme in the regulation of glycerol uptake and metabolism. Catalyzes the phosphorylation of glycerol to yield sn-glycerol 3-phosphate. In Klebsiella pneumoniae subsp. pneumoniae (strain ATCC 700721 / MGH 78578), this protein is Glycerol kinase.